A 205-amino-acid polypeptide reads, in one-letter code: MAMQKLFTYIYEFIEYRKMVLLEEKVPYDKFVQMVFNTGFFRINAETLNHGIVSVFIFGANGKYVHHGGDMRTLLTNTLNEKKQYEELILIVDKPILGKKNILDIIVEQRAANPTVVINIYPYHLFCINIPKVSAIPKHKLITQEEAQEFLGREYLQPQDLMQISASDPPVVWLGGRPGDFVQIERPSETAMHAVVIRFITKSKI.

It belongs to the archaeal RpoH/eukaryotic RPB5 RNA polymerase subunit family. Part of the viral DNA-directed RNA polymerase that consists of 8 polII-like subunits (RPB1, RPB2, RPB3, RPB5, RPB6, RPB7, RPB9, RPB10), a capping enzyme and a termination factor.

It localises to the host cytoplasm. The protein resides in the virion. Its function is as follows. Component of the DNA-directed RNA polymerase (RNAP) that catalyzes the transcription in the cytoplasm of viral DNA into RNA using the four ribonucleoside triphosphates as substrates. The protein is DNA-directed RNA polymerase RPB5 homolog of Ornithodoros (relapsing fever ticks).